Here is a 319-residue protein sequence, read N- to C-terminus: Acetyl esterase (319 aa).

Positions 91-93 (HGG) match the Involved in the stabilization of the negatively charged intermediate by the formation of the oxyanion hole motif. Active-site residues include Ser-165, Asp-262, and His-292.

This sequence belongs to the 'GDXG' lipolytic enzyme family. In terms of assembly, homodimer. Interacts with MalT and MelA.

The protein resides in the cytoplasm. Functionally, displays esterase activity towards short chain fatty esters (acyl chain length of up to 8 carbons). Able to hydrolyze triacetylglycerol (triacetin) and tributyrylglycerol (tributyrin), but not trioleylglycerol (triolein) or cholesterol oleate. Negatively regulates MalT activity by antagonizing maltotriose binding. Inhibits MelA galactosidase activity. In Escherichia coli O7:K1 (strain IAI39 / ExPEC), this protein is Acetyl esterase.